Consider the following 495-residue polypeptide: Cytochrome P450 monooxygenase FrzC (495 aa).

Residues 8-28 traverse the membrane as a helical segment; the sequence is GLVVGLWVTYHILLGTYNVFF. C437 is a heme binding site.

It belongs to the cytochrome P450 family. Requires heme as cofactor.

Its subcellular location is the membrane. The enzyme catalyses (S,S)-2,5-di-(p-hydroxybenzyl)piperazine + reduced [NADPH--hemoprotein reductase] + O2 = (1S,4S)-4-[(4-hydroxyphenyl)methyl]-2,5-diazaspiro[bicyclo[3.2.1]octane-6,1'-cyclohexane]-2',5'-dien-4'-one + oxidized [NADPH--hemoprotein reductase] + 2 H2O + H(+). Its pathway is secondary metabolite biosynthesis. Functionally, cytochrome P450 monooxygenase; part of the gene cluster that mediates the biosynthesis of the alkaloid (-)-FR901483, a potent immunosuppressant that shows efficacy in animal models and a probable inhibitor of purine nucleotide biosynthesis by targeting phosphoribosylpyrophosphate amidotransferase (PPAT). Within the pathway, FrzC catalyzes the coupling between N10 and C1' to produce a 1,4-diazabicyclo[3.2.1]octane spiro-fused to a 2,5-cyclohexadienone. FrzC probably first catalyzes homolysis of the N-H bond to generate the N10 radical which is followed by an O-H abstraction to give the phenolic radical which can be delocalized to C1'. Radical coupling between N10 and C1' then forms. The biosynthesis of (-)-FR901483 starts with the condensation of two L-tyrosines to yield (S,S)-dityrosyl-piperazine. This process occurs in 3 steps with the non-canonical nonribosomal peptide synthetase FrzA catalyzing the reduction of L-tyrosine into L-tyrosinal, the spontaneous condensation of 2 L-tyrosinal units, and the subsequent reduction by the NmrA-like family domain-containing oxidoreductase FrzB. The cytochrome P450 monooxygenase FrzC then performs coupling between N10 and C1' to morph the piperazine into a 1,4-diazabicyclo[3.2.1]octane spiro-fused to a 2,5-cyclohexadienone. The dienone portion is further reduced to cyclohexanone by the flavin-dependent reductase FrzD. The methyltranserases (MTs) FrzE and FrzF are then involved in the methylation at the C10' amine and the C4 phenolic oxygen, respectively. The order of the two MTs appear to be interchangeable. Cleavage of the C9-N10' bond by the dioxygenase FrzG then leads to formation of a conjugated iminium. In addition to the oxidation of C9, an additional dehydrogenation between C7 and C8 can occur to give a likely shunt product. The next biosynthetic step is the intramolecular aldol condensation catalyzed by the newly identified aldolase FrzH to yield an aza-tricyclic product with the formation of a C9-C3' bond. The short-chain dehydrogenase/reductase FrzI then produces dephospho-(-)-FR901483 that is phosphorylated at C4'-OH into (-)-FR901483 by the phosphotransferase FrzJ. This Cladobotryum sp protein is Cytochrome P450 monooxygenase FrzC.